A 312-amino-acid polypeptide reads, in one-letter code: DNA-directed RNA polymerase subunit alpha (312 aa).

The tract at residues methionine 1 to threonine 229 is alpha N-terminal domain (alpha-NTD). The interval glutamate 239–alanine 312 is alpha C-terminal domain (alpha-CTD).

The protein belongs to the RNA polymerase alpha chain family. In terms of assembly, in cyanobacteria the RNAP catalytic core is composed of 2 alpha, 1 beta, 1 beta', 1 gamma and 1 omega subunit. When a sigma factor is associated with the core the holoenzyme is formed, which can initiate transcription.

It catalyses the reaction RNA(n) + a ribonucleoside 5'-triphosphate = RNA(n+1) + diphosphate. Functionally, DNA-dependent RNA polymerase catalyzes the transcription of DNA into RNA using the four ribonucleoside triphosphates as substrates. This chain is DNA-directed RNA polymerase subunit alpha, found in Synechococcus sp. (strain CC9605).